Here is a 274-residue protein sequence, read N- to C-terminus: 2,3,4,5-tetrahydropyridine-2,6-dicarboxylate N-succinyltransferase (274 aa).

Residues Arg104 and Asp141 each coordinate substrate.

The protein belongs to the transferase hexapeptide repeat family. In terms of assembly, homotrimer.

Its subcellular location is the cytoplasm. The catalysed reaction is (S)-2,3,4,5-tetrahydrodipicolinate + succinyl-CoA + H2O = (S)-2-succinylamino-6-oxoheptanedioate + CoA. It participates in amino-acid biosynthesis; L-lysine biosynthesis via DAP pathway; LL-2,6-diaminopimelate from (S)-tetrahydrodipicolinate (succinylase route): step 1/3. The protein is 2,3,4,5-tetrahydropyridine-2,6-dicarboxylate N-succinyltransferase of Salmonella arizonae (strain ATCC BAA-731 / CDC346-86 / RSK2980).